The primary structure comprises 223 residues: Peptidyl-prolyl cis-trans isomerase, mitochondrial (223 aa).

A mitochondrion-targeting transit peptide spans 1–44 (MFGPRHFSVLKTTGSLVSSTFSSSLKPTATFSCARAFSQTSSIM). Residues 62 to 222 (NKPTSEIKAQ…KKPTIVDCGA (161 aa)) enclose the PPIase cyclophilin-type domain.

Belongs to the cyclophilin-type PPIase family.

The protein localises to the mitochondrion. The protein resides in the cytoplasm. It catalyses the reaction [protein]-peptidylproline (omega=180) = [protein]-peptidylproline (omega=0). Binds cyclosporin A (CsA). CsA mediates some of its effects via an inhibitory action on PPIase. In terms of biological role, PPIases accelerate the folding of proteins. It catalyzes the cis-trans isomerization of proline imidic peptide bonds in oligopeptides. The chain is Peptidyl-prolyl cis-trans isomerase, mitochondrial (csr-1) from Neurospora crassa (strain ATCC 24698 / 74-OR23-1A / CBS 708.71 / DSM 1257 / FGSC 987).